The following is an 82-amino-acid chain: UPF0180 protein BAA_1480 (82 aa).

This sequence belongs to the UPF0180 family.

This is UPF0180 protein BAA_1480 from Bacillus anthracis (strain A0248).